A 453-amino-acid chain; its full sequence is Aminodeoxychorismate synthase component 1 (453 aa).

L-tryptophan is bound by residues S36, 43 to 46 (YSRF), and 240 to 242 (PFS). E258 functions as the Proton donor in the catalytic mechanism. K274 serves as the catalytic N6-(4-deoxychorismate)-lysine intermediate.

The protein belongs to the anthranilate synthase component I family. As to quaternary structure, monomer. Heterodimer consisting of two non-identical subunits: a glutamine amidotransferase subunit (PabA) and a aminodeoxychorismate synthase subunit (PabB). Mg(2+) serves as cofactor.

The catalysed reaction is chorismate + L-glutamine = 4-amino-4-deoxychorismate + L-glutamate. It participates in cofactor biosynthesis; tetrahydrofolate biosynthesis; 4-aminobenzoate from chorismate: step 1/2. Its activity is regulated as follows. Inhibited by 6-diazo-5-oxo-L-norleucine (DON). The inhibition is competitive with glutamine but uncompetitive with chorismate. Also inhibited by 2-fluorochorismate. Part of a heterodimeric complex that catalyzes the two-step biosynthesis of 4-amino-4-deoxychorismate (ADC), a precursor of p-aminobenzoate (PABA) and tetrahydrofolate. In the first step, a glutamine amidotransferase (PabA) generates ammonia as a substrate that, along with chorismate, is used in the second step, catalyzed by aminodeoxychorismate synthase (PabB) to produce ADC. PabB, in the absence of PabA, can catalyze the formation of ADC in the presence of exogenous ammonia. This chain is Aminodeoxychorismate synthase component 1 (pabB), found in Escherichia coli (strain K12).